A 377-amino-acid polypeptide reads, in one-letter code: Spore coat protein SA (377 aa).

It belongs to the glycosyltransferase group 1 family. Glycosyltransferase 4 subfamily.

This chain is Spore coat protein SA (cotSA), found in Bacillus subtilis (strain 168).